Reading from the N-terminus, the 822-residue chain is Calpain-3 (822 aa).

The disordered stretch occupies residues 1–36 (MPTVISASVAPRTGAEPMSPGPIAQAAQDKGTEAGG). The region spanning 74–418 (LFVDPEFPPD…FTKLEICNLT (345 aa)) is the Calpain catalytic domain. Active-site residues include cysteine 129, histidine 335, and asparagine 359. The tract at residues 419-587 (ADALESDKLQ…KRNLSEEVEN (169 aa)) is domain III. The tract at residues 588–650 (TISVDRPVKK…EPGNTDQESE (63 aa)) is linker. The disordered stretch occupies residues 604 to 652 (IFVSDRANSNKELGVDQETEEGKDNTSPDKQAKSPQLEPGNTDQESEEQ). A compositionally biased stretch (basic and acidic residues) spans 623–635 (EEGKDNTSPDKQA). 4 EF-hand domains span residues 650-684 (EEQR…VVNK), 693-726 (FTLE…KKIK), 723-758 (KKIK…AGFH), and 788-822 (VRLE…TMYA). Positions 651 to 822 (EQRQFRNIFR…LEWLQLTMYA (172 aa)) are domain IV. Ca(2+) contacts are provided by alanine 663, aspartate 666, glutamate 668, glutamate 673, aspartate 706, aspartate 708, serine 710, arginine 712, glutamate 717, aspartate 736, aspartate 738, serine 740, threonine 742, glutamate 747, aspartate 801, aspartate 803, aspartate 805, and isoleucine 807.

It belongs to the peptidase C2 family. As to quaternary structure, homodimer; via EF-hand domain 4. Interacts with TTN/titin. Interacts with CMYA5; this interaction, which results in CMYA5 proteolysis, may protect CAPN3 from autolysis. Interacts with SIMC1. Interacts with UTP25; the interaction is required for CAPN3 translocation to the nucleolus. In terms of tissue distribution, skeletal muscle.

The protein resides in the cytoplasm. The protein localises to the nucleus. It localises to the nucleolus. The enzyme catalyses Broad endopeptidase activity.. With respect to regulation, activated by micromolar concentrations of calcium and inhibited by calpastatin. Its function is as follows. Calcium-regulated non-lysosomal thiol-protease. Proteolytically cleaves CTBP1. Mediates, with UTP25, the proteasome-independent degradation of p53/TP53. The sequence is that of Calpain-3 (CAPN3) from Bos taurus (Bovine).